Reading from the N-terminus, the 365-residue chain is 2-aminoethylphosphonate--pyruvate transaminase (365 aa).

Lys194 carries the post-translational modification N6-(pyridoxal phosphate)lysine.

It belongs to the class-V pyridoxal-phosphate-dependent aminotransferase family. PhnW subfamily. Homodimer. Requires pyridoxal 5'-phosphate as cofactor.

It catalyses the reaction (2-aminoethyl)phosphonate + pyruvate = phosphonoacetaldehyde + L-alanine. Its function is as follows. Involved in phosphonate degradation. The polypeptide is 2-aminoethylphosphonate--pyruvate transaminase (Bacillus cereus (strain ATCC 14579 / DSM 31 / CCUG 7414 / JCM 2152 / NBRC 15305 / NCIMB 9373 / NCTC 2599 / NRRL B-3711)).